Consider the following 406-residue polypeptide: Argininosuccinate synthase (406 aa).

Residues 11-19 (AYSGGLDTS) and Ala-38 each bind ATP. Tyr-91 and Ser-96 together coordinate L-citrulline. Gly-121 is a binding site for ATP. L-aspartate contacts are provided by Thr-123, Asn-127, and Asp-128. Residue Asn-127 coordinates L-citrulline. Arg-131, Ser-181, Ser-190, Glu-266, and Tyr-278 together coordinate L-citrulline.

The protein belongs to the argininosuccinate synthase family. Type 1 subfamily. Homotetramer.

It is found in the cytoplasm. The enzyme catalyses L-citrulline + L-aspartate + ATP = 2-(N(omega)-L-arginino)succinate + AMP + diphosphate + H(+). It participates in amino-acid biosynthesis; L-arginine biosynthesis; L-arginine from L-ornithine and carbamoyl phosphate: step 2/3. In Campylobacter curvus (strain 525.92), this protein is Argininosuccinate synthase.